The chain runs to 509 residues: ATP synthase subunit alpha (509 aa).

Position 169–176 (169–176 (GDRQTGKT)) interacts with ATP.

This sequence belongs to the ATPase alpha/beta chains family. In terms of assembly, F-type ATPases have 2 components, CF(1) - the catalytic core - and CF(0) - the membrane proton channel. CF(1) has five subunits: alpha(3), beta(3), gamma(1), delta(1), epsilon(1). CF(0) has four main subunits: a(1), b(1), b'(1) and c(9-12).

It is found in the cellular chromatophore membrane. The catalysed reaction is ATP + H2O + 4 H(+)(in) = ADP + phosphate + 5 H(+)(out). Produces ATP from ADP in the presence of a proton gradient across the membrane. The alpha chain is a regulatory subunit. This chain is ATP synthase subunit alpha, found in Rhodobacter capsulatus (Rhodopseudomonas capsulata).